Reading from the N-terminus, the 999-residue chain is Probable hemoglobin and hemoglobin-haptoglobin-binding protein 4 (999 aa).

The signal sequence occupies residues 1-24; the sequence is MTNFRLNVLAYSVMLGLTASVAYA. The interval 25-52 is disordered; that stretch reads EPTNQPTNQPTNQPTNQPTNQPTNQNSN. Repeat copies occupy residues 26–29, 30–33, 34–37, 38–41, 42–45, and 46–49. A 6 X 4 AA tandem repeats of P-T-N-Q region spans residues 26–49; it reads PTNQPTNQPTNQPTNQPTNQPTNQ. A compositionally biased stretch (low complexity) spans 26–50; that stretch reads PTNQPTNQPTNQPTNQPTNQPTNQN. The TonB box signature appears at 58–65; it reads EQINVLGS. Residues 68–195 enclose the TBDR plug domain; that stretch reads NNDNTPPKIA…LGGAVLFETK (128 aa). Positions 203 to 999 constitute a TBDR beta-barrel domain; it reads EKDWHIGYKA…NYKLSAEITF (797 aa). The short motif at 982–999 is the TonB C-terminal box element; the sequence is NRFYSPGRNYKLSAEITF.

Belongs to the TonB-dependent receptor family. Hemoglobin/haptoglobin binding protein subfamily.

The protein localises to the cell outer membrane. Functionally, acts as a receptor for hemoglobin or the hemoglobin/haptoglobin complex of the human host and is required for heme uptake. The sequence is that of Probable hemoglobin and hemoglobin-haptoglobin-binding protein 4 from Haemophilus influenzae (strain ATCC 51907 / DSM 11121 / KW20 / Rd).